The sequence spans 947 residues: Receptor-like protein 56 (947 aa).

The N-terminal stretch at 1 to 27 (MEGKVFSGQKLILVMLLLGHLHGFSSC) is a signal peptide. Residues 28-899 (IEKERKALLE…EDDKEVAIDM (872 aa)) are Extracellular-facing. 3 N-linked (GlcNAc...) asparagine glycosylation sites follow: asparagine 60, asparagine 75, and asparagine 98. 9 LRR repeats span residues 105–128 (FEEV…VEGY), 134–157 (LRNL…FLNA), 159–182 (TSLT…ELKN), 183–207 (LTNL…EFPY), 209–232 (KKLK…GLKN), 233–257 (LTNL…VFCE), 259–281 (KNLQ…CFGN), 282–305 (LNKL…SFSS), and 307–330 (ESLE…PLTN). 3 N-linked (GlcNAc...) asparagine glycosylation sites follow: asparagine 141, asparagine 148, and asparagine 182. Residue asparagine 232 is glycosylated (N-linked (GlcNAc...) asparagine). An N-linked (GlcNAc...) asparagine glycan is attached at asparagine 330. An LRR 10; degenerate repeat occupies 332-356 (TKLKVFIFSSKDDMVQVKIESTWQP). LRR repeat units follow at residues 357–380 (LFQL…LMYQ), 381–404 (KNLH…LLEN), 405–427 (NPEL…PTSV), 428–450 (HNLQ…NFGR), 452–476 (LPNL…MGEM), 477–500 (YNIS…FVSS), 502–527 (FSLS…NFTS), 529–549 (IVLR…LLTL), 550–575 (VDLC…VFEY), 577–598 (NFLD…SLDN), 600–616 (LFLH…DTFL), 617–640 (GSIQ…VDTQ), 642–663 (ISFL…LCEF), 664–686 (SKMR…CFNN), 757–780 (LNSM…ELGD), 781–804 (LFKL…SFSK), 805–829 (LQDI…LTNL), and 831–854 (SLAI…QFNT). Asparagine 415 is a glycosylation site (N-linked (GlcNAc...) asparagine). Asparagine 459, asparagine 478, asparagine 488, and asparagine 524 each carry an N-linked (GlcNAc...) asparagine glycan. Asparagine 606 is a glycosylation site (N-linked (GlcNAc...) asparagine). Asparagine 686 is a glycosylation site (N-linked (GlcNAc...) asparagine). Asparagine 788, asparagine 828, asparagine 836, and asparagine 841 each carry an N-linked (GlcNAc...) asparagine glycan. A helical membrane pass occupies residues 900–920 (LVFYWSTAGTYVTALIGILVL). The Cytoplasmic portion of the chain corresponds to 921-947 (MCVDCSWRRAWLRLVDAFIASAKSKLA).

This sequence belongs to the RLP family.

It localises to the cell membrane. In Arabidopsis thaliana (Mouse-ear cress), this protein is Receptor-like protein 56.